The primary structure comprises 442 residues: UDP-N-acetylmuramate--L-alanine ligase (442 aa).

109–115 is a binding site for ATP; sequence GAHGKTS.

The protein belongs to the MurCDEF family.

It localises to the cytoplasm. The enzyme catalyses UDP-N-acetyl-alpha-D-muramate + L-alanine + ATP = UDP-N-acetyl-alpha-D-muramoyl-L-alanine + ADP + phosphate + H(+). It participates in cell wall biogenesis; peptidoglycan biosynthesis. Its function is as follows. Cell wall formation. This Streptococcus pyogenes serotype M6 (strain ATCC BAA-946 / MGAS10394) protein is UDP-N-acetylmuramate--L-alanine ligase.